We begin with the raw amino-acid sequence, 613 residues long: Zinc metalloproteinase-disintegrin-like MTP8 (613 aa).

Residues 1-20 (MIEVLLVTICFTVFPYQGSP) form the signal peptide. Positions 21–191 (IILESGNVND…DETIEKISQL (171 aa)) are excised as a propeptide. Positions 205 to 401 (KYIELYVVVD…VRPQCILNKP (197 aa)) constitute a Peptidase M12B domain. Glu208 lines the Ca(2+) pocket. The N-linked (GlcNAc...) asparagine glycan is linked to Asn282. Residue Asp292 coordinates Ca(2+). 3 disulfides stabilise this stretch: Cys316–Cys396, Cys356–Cys380, and Cys358–Cys363. Positions 341, 345, and 351 each coordinate Zn(2+). Ca(2+) is bound by residues Cys396, Asn399, Asn414, Phe416, Glu418, Glu421, and Asp424. Positions 409 to 495 (PPVCGNYFVE…KCPTDSFQRN (87 aa)) constitute a Disintegrin domain. 15 cysteine pairs are disulfide-bonded: Cys412/Cys441, Cys423/Cys436, Cys425/Cys431, Cys435/Cys458, Cys449/Cys455, Cys454/Cys480, Cys467/Cys487, Cys474/Cys506, Cys499/Cys511, Cys518/Cys568, Cys533/Cys575, Cys543/Cys577, Cys546/Cys556, Cys563/Cys601, and Cys595/Cys606. N-linked (GlcNAc...) asparagine glycosylation is present at Asn437. Positions 473 to 475 (DCD) match the D/ECD-tripeptide motif. Residues Asp475, Leu476, Glu478, and Asp490 each coordinate Ca(2+). Residues Asn550 and Asn572 are each glycosylated (N-linked (GlcNAc...) asparagine).

This sequence belongs to the venom metalloproteinase (M12B) family. P-III subfamily. As to quaternary structure, monomer. It depends on Zn(2+) as a cofactor. As to expression, expressed by the venom gland.

The protein localises to the secreted. In terms of biological role, snake venom zinc metalloproteinase that may impair hemostasis in the prey. This chain is Zinc metalloproteinase-disintegrin-like MTP8, found in Drysdalia coronoides (White-lipped snake).